A 591-amino-acid chain; its full sequence is MKRTNYAGRTSEEQIGQEVVVKGWVAKRRNLGGLIFIDLWDREGIVQLVFNEEEDQAAFEVANQARNQYILEARGLVRARAEVNPDIATGKIEIEVKEAKILAKSQTPPFEVQDDVDASEDLRLKYRYVDLRRPKMMNYLKLRSKVTSIVHNYFDNNDFLDVETPELTRSTPEGARDYIVPSRVYPGHFYALPQSPQLFKQLLMAAGVDKYYQIAKCFRDEDLRGDRQPEFTQIDTEMSFAEPEEIQAMAEGLIKRVMKEAVGVDVPTPFPRMEWQEAMDKYGSDKPDTRFDMLIQDVSDLVKDSSFKVFSATVADGNFVRAIVVPGGADKYSRKDITKKEDYIKRYGAKGLAWVKVTEEGYNGPVAKFLNDDANALNERLSAKVGDLVLFVAGSFHVVCDSLGYLRESIAKELDLIDENKFNYLWVINWPMFEYDEGFGKWIAAHHPFTMLNEDDLKYLEEGEDPHQAHAQSYDIVLNGNEIGGGSIRIHDPEVQEKVFKALGYTKEAAQARFGFLIKALENGMPPEGGMAFGLDRWVMLLAHADSIRDVIAFPKNSKAVEPLTAAPGTVDDEQLEVLHLNVEEAPKEAE.

E173 contacts L-aspartate. The aspartate stretch occupies residues 197–200; it reads QLFK. L-aspartate is bound at residue R219. Residues 219–221 and Q228 each bind ATP; that span reads RDE. Residue H446 coordinates L-aspartate. Residue E482 coordinates ATP. Residue R489 participates in L-aspartate binding. 534 to 537 is a binding site for ATP; sequence GLDR.

The protein belongs to the class-II aminoacyl-tRNA synthetase family. Type 1 subfamily. Homodimer.

It is found in the cytoplasm. The catalysed reaction is tRNA(Asp) + L-aspartate + ATP = L-aspartyl-tRNA(Asp) + AMP + diphosphate. Its function is as follows. Catalyzes the attachment of L-aspartate to tRNA(Asp) in a two-step reaction: L-aspartate is first activated by ATP to form Asp-AMP and then transferred to the acceptor end of tRNA(Asp). This Limosilactobacillus fermentum (strain NBRC 3956 / LMG 18251) (Lactobacillus fermentum) protein is Aspartate--tRNA ligase.